Here is a 130-residue protein sequence, read N- to C-terminus: Small ribosomal subunit protein uS9 (130 aa).

Belongs to the universal ribosomal protein uS9 family.

This is Small ribosomal subunit protein uS9 from Aster yellows witches'-broom phytoplasma (strain AYWB).